A 497-amino-acid chain; its full sequence is uncharacterized protein (497 aa).

The next 11 helical transmembrane spans lie at 91–111, 119–139, 149–169, 179–199, 215–235, 283–303, 319–339, 347–367, 374–394, 406–426, and 439–459; these read WVGTSFYLGFMVFSLPLSTLL, VTSAFIVAWGILMTLTCLVHS, LLGILESVITPAFVLFIAQWY, AFLVAWNGLGGLIGGSMSYGL, ILFIITGLITIINGVFIFIHI, MYLYFFLQIAVAIPNGGLSNF, LLMNMPTSSISFAALTLFGLI, MDIALVGLAINLTSGSLIAFA, LAGYWLFGISPIPYICILSCI, FMSAVSMIGYCVGNMVGPQTF, and VSFVVCYCVAIFIIIAIYAVN.

It belongs to the major facilitator superfamily. Allantoate permease family.

It localises to the golgi apparatus. The protein resides in the membrane. This is an uncharacterized protein from Schizosaccharomyces pombe (strain 972 / ATCC 24843) (Fission yeast).